We begin with the raw amino-acid sequence, 1004 residues long: Caspase recruitment domain-containing protein 14 (1004 aa).

In terms of domain architecture, CARD spans 15-107 (DEETLWEMME…DVYTLVTGLQ (93 aa)). Positions 128–409 (LAGAIGSLQE…RTQLRQLQAE (282 aa)) form a coiled coil. The interval 409-568 (EPPGVLKQEA…RRPARRILSQ (160 aa)) is maintains the protein in an inactive state. Residue Ser-544 is modified to Phosphoserine. The PDZ domain maps to 568-658 (QVTMLAFQGD…FCCLSVKVNT (91 aa)). The Guanylate kinase-like domain maps to 807-990 (AESCLTLVPY…LLSCVRQAIA (184 aa)).

Interacts (via CARD domain) with BCL10 (via CARD domain). Forms a complex with MALT1 and BCL10; resulting in the formation of a CBM (CARD14-BLC10-MALT1) complex. Interacts with TRAF2, TRAF3 and TRAF6. In terms of tissue distribution, isoform 1 is detected in placenta and epidermal keratinocytes. Isoform 2 is detected in leukocytes and fetal brain.

The protein localises to the cytoplasm. Its function is as follows. Acts as a scaffolding protein that can activate the inflammatory transcription factor NF-kappa-B and p38/JNK MAP kinase signaling pathways. Forms a signaling complex with BCL10 and MALT1, and activates MALT1 proteolytic activity and inflammatory gene expression. MALT1 is indispensable for CARD14-induced activation of NF-kappa-B and p38/JNK MAP kinases. May play a role in signaling mediated by TRAF2, TRAF3 and TRAF6 and protects cells against apoptosis. Not able to activate the inflammatory transcription factor NF-kappa-B and may function as a dominant negative regulator. The sequence is that of Caspase recruitment domain-containing protein 14 (CARD14) from Homo sapiens (Human).